The following is a 207-amino-acid chain: Uracil phosphoribosyltransferase (207 aa).

Residues Arg77, Arg102, and 129–137 (DPMLATGGS) each bind 5-phospho-alpha-D-ribose 1-diphosphate. Uracil-binding positions include Ile192 and 197–199 (GDA). Position 198 (Asp198) interacts with 5-phospho-alpha-D-ribose 1-diphosphate.

Belongs to the UPRTase family. Mg(2+) is required as a cofactor.

It carries out the reaction UMP + diphosphate = 5-phospho-alpha-D-ribose 1-diphosphate + uracil. It functions in the pathway pyrimidine metabolism; UMP biosynthesis via salvage pathway; UMP from uracil: step 1/1. Its activity is regulated as follows. Allosterically activated by GTP. Its function is as follows. Catalyzes the conversion of uracil and 5-phospho-alpha-D-ribose 1-diphosphate (PRPP) to UMP and diphosphate. The polypeptide is Uracil phosphoribosyltransferase (Ureaplasma parvum serovar 3 (strain ATCC 27815 / 27 / NCTC 11736)).